The primary structure comprises 556 residues: DNA ligase B (556 aa).

Lys-124 functions as the N6-AMP-lysine intermediate in the catalytic mechanism.

This sequence belongs to the NAD-dependent DNA ligase family. LigB subfamily.

It catalyses the reaction NAD(+) + (deoxyribonucleotide)n-3'-hydroxyl + 5'-phospho-(deoxyribonucleotide)m = (deoxyribonucleotide)n+m + AMP + beta-nicotinamide D-nucleotide.. Its function is as follows. Catalyzes the formation of phosphodiester linkages between 5'-phosphoryl and 3'-hydroxyl groups in double-stranded DNA using NAD as a coenzyme and as the energy source for the reaction. In Pseudomonas fluorescens (strain ATCC BAA-477 / NRRL B-23932 / Pf-5), this protein is DNA ligase B.